Here is a 750-residue protein sequence, read N- to C-terminus: Polyribonucleotide nucleotidyltransferase (750 aa).

Mg(2+)-binding residues include Asp-492 and Asp-498. The KH domain occupies 559–618 (PQLSVVEVNPEIIRVIIGPGGKNIKAITSATGASIDIEDSGRISIFAPTKESMDMAREMV). An S1 motif domain is found at 628-695 (GKNYTAKVRK…NDGRVRASRK (68 aa)). The tract at residues 705 to 750 (EWDPADTARPPRKPRDRDDRGDRGGRGDRGDRGGRNGRGGDRRDRR) is disordered. Over residues 717 to 750 (KPRDRDDRGDRGGRGDRGDRGGRNGRGGDRRDRR) the composition is skewed to basic and acidic residues.

The protein belongs to the polyribonucleotide nucleotidyltransferase family. Requires Mg(2+) as cofactor.

The protein resides in the cytoplasm. It catalyses the reaction RNA(n+1) + phosphate = RNA(n) + a ribonucleoside 5'-diphosphate. Its function is as follows. Involved in mRNA degradation. Catalyzes the phosphorolysis of single-stranded polyribonucleotides processively in the 3'- to 5'-direction. In Oleidesulfovibrio alaskensis (strain ATCC BAA-1058 / DSM 17464 / G20) (Desulfovibrio alaskensis), this protein is Polyribonucleotide nucleotidyltransferase.